The sequence spans 115 residues: Large ribosomal subunit protein bL19 (115 aa).

The protein belongs to the bacterial ribosomal protein bL19 family.

In terms of biological role, this protein is located at the 30S-50S ribosomal subunit interface and may play a role in the structure and function of the aminoacyl-tRNA binding site. The protein is Large ribosomal subunit protein bL19 of Buchnera aphidicola subsp. Cinara cedri (strain Cc).